We begin with the raw amino-acid sequence, 546 residues long: MASSQQEQQACEIAPASRGNSNRIAALNLDGQSPPCIDDYDQQKPGWRKFLPYVGPGFLVSLAYLDPGNLETDLQAGANHGYELLWVILIGLIFALIIQSLAANLGVSTGRHLAELCKAEYPKYVRWSLWLLAEVAVIAADIPEVIGTAFALNILFHIPVWAGVLMTGLSTLLLLGLQKYGIRKLELLISALVFTMAACFFGELSYVKPPASGVLKGLFIPKLSGQGATGDAIALLGALVMPHNLFLHSALVLSRKVPNSVRGINDACRYFLIESGFALFVAFLINVSIISVSGTVCLAKNLSPENADQCGDLTLKGASFLLKNVLGKSSSTIYAIALLASGQSSTITGTYAGQYIMQGFLDLKMRKWLRNLTTRCIAILPSLFVSIIGGSSGASRLIIIASMILSFELPFALIPLLKFSSSNPKMGPHKNSIYIIVISWTLGFMIIGINVYYLSTGFVGWLTHNNLPKVGNVIIGIIVFPLMAIYILAIIYLTFRKDTAVTYIDPVKNDPNLEANMENGQGKSNQEMAFGRVPYREDLADVPLPE.

The next 8 helical transmembrane spans lie at 50 to 70, 83 to 103, 128 to 150, 154 to 176, 187 to 207, 233 to 253, 270 to 290, and 333 to 353; these read FLPY…PGNL, ELLW…SLAA, SLWL…GTAF, ILFH…LLLG, LLIS…LSYV, IALL…ALVL, YFLI…VSII, and IYAI…TYAG. An N-linked (GlcNAc...) asparagine glycan is attached at asparagine 371. 4 helical membrane-spanning segments follow: residues 374-394, 397-417, 433-453, and 473-493; these read TRCI…SSGA, LIII…IPLL, IYII…NVYY, and VIIG…IIYL.

The protein belongs to the NRAMP (TC 2.A.55) family.

The protein localises to the membrane. Functionally, probable divalent metal transporter. The chain is Metal transporter Nramp6.2 from Populus trichocarpa (Western balsam poplar).